We begin with the raw amino-acid sequence, 335 residues long: Ornithine carbamoyltransferase (335 aa).

Carbamoyl phosphate contacts are provided by residues 60–63 (STRT), Gln-87, Arg-111, and 138–141 (HPTQ). L-ornithine-binding positions include Asn-171, Asp-235, and 239–240 (SM). Carbamoyl phosphate contacts are provided by residues 277–278 (CL) and Arg-322.

It belongs to the aspartate/ornithine carbamoyltransferase superfamily. OTCase family.

Its subcellular location is the cytoplasm. The enzyme catalyses carbamoyl phosphate + L-ornithine = L-citrulline + phosphate + H(+). Its pathway is amino-acid biosynthesis; L-arginine biosynthesis; L-arginine from L-ornithine and carbamoyl phosphate: step 1/3. Its function is as follows. Reversibly catalyzes the transfer of the carbamoyl group from carbamoyl phosphate (CP) to the N(epsilon) atom of ornithine (ORN) to produce L-citrulline. The protein is Ornithine carbamoyltransferase of Streptomyces avermitilis (strain ATCC 31267 / DSM 46492 / JCM 5070 / NBRC 14893 / NCIMB 12804 / NRRL 8165 / MA-4680).